We begin with the raw amino-acid sequence, 212 residues long: Nascent polypeptide-associated complex subunit alpha-like protein 4 (212 aa).

Basic and acidic residues predominate over residues 25 to 35; it reads QKENDVVVEDV. The disordered stretch occupies residues 25-74; that stretch reads QKENDVVVEDVKDGDEDDDDVDDDDDEIADGAGENEASKQSRSEKKSRKA. A compositionally biased stretch (acidic residues) spans 36–53; sequence KDGDEDDDDVDDDDDEIA. One can recognise an NAC-A/B domain in the interval 65–130; sequence SRSEKKSRKA…AKIDDMSSQL (66 aa). A UBA domain is found at 173 to 210; the sequence is VEAKDIDLVMTQAGVSRPKAVKALKESNGDIVSAIMEL.

It belongs to the NAC-alpha family.

Functionally, may promote appropriate targeting of ribosome-nascent polypeptide complexes. In Arabidopsis thaliana (Mouse-ear cress), this protein is Nascent polypeptide-associated complex subunit alpha-like protein 4.